A 350-amino-acid chain; its full sequence is Protein O-mannose kinase (350 aa).

Met-1 carries the N-acetylmethionine modification. Topologically, residues 1–20 (MEKQPQNSRRGLAPREVPPA) are cytoplasmic. Residues 21-43 (VGLLLIMALMNTLLYLCLDHFFI) form a helical; Signal-anchor for type II membrane protein membrane-spanning segment. Residues 44–350 (APRQSTVDPT…AMMSQAREML (307 aa)) lie on the Lumenal side of the membrane. A Protein kinase domain is found at 81–350 (VRQLKRVGEG…AMMSQAREML (270 aa)). N-linked (GlcNAc...) asparagine glycosylation is found at Asn-165, Asn-220, and Asn-235.

The protein belongs to the protein kinase superfamily. Ser/Thr protein kinase family. STKL subfamily. Highest expression is observed in brain, skeletal muscle, kidney and heart in fetal and adult tissues.

It localises to the endoplasmic reticulum membrane. It catalyses the reaction 3-O-[beta-D-GalNAc-(1-&gt;3)-beta-D-GlcNAc-(1-&gt;4)-alpha-D-Man]-L-Thr-[protein] + ATP = 3-O-[beta-D-GalNAc-(1-&gt;3)-beta-D-GlcNAc-(1-&gt;4)-(O-6-P-alpha-D-Man)]-Thr-[protein] + ADP + H(+). In terms of biological role, protein O-mannose kinase that specifically mediates phosphorylation at the 6-position of an O-mannose of the trisaccharide (N-acetylgalactosamine (GalNAc)-beta-1,3-N-acetylglucosamine (GlcNAc)-beta-1,4-mannose) to generate phosphorylated O-mannosyl trisaccharide (N-acetylgalactosamine-beta-1,3-N-acetylglucosamine-beta-1,4-(phosphate-6-)mannose). Phosphorylated O-mannosyl trisaccharide is a carbohydrate structure present in alpha-dystroglycan (DAG1), which is required for binding laminin G-like domain-containing extracellular proteins with high affinity. Only shows kinase activity when the GalNAc-beta-3-GlcNAc-beta-terminus is linked to the 4-position of O-mannose, suggesting that this disaccharide serves as the substrate recognition motif. The sequence is that of Protein O-mannose kinase (POMK) from Homo sapiens (Human).